We begin with the raw amino-acid sequence, 346 residues long: UDP-3-O-acylglucosamine N-acyltransferase (346 aa).

Residue histidine 253 is the Proton acceptor of the active site.

It belongs to the transferase hexapeptide repeat family. LpxD subfamily. As to quaternary structure, homotrimer.

The catalysed reaction is a UDP-3-O-[(3R)-3-hydroxyacyl]-alpha-D-glucosamine + a (3R)-hydroxyacyl-[ACP] = a UDP-2-N,3-O-bis[(3R)-3-hydroxyacyl]-alpha-D-glucosamine + holo-[ACP] + H(+). The protein operates within bacterial outer membrane biogenesis; LPS lipid A biosynthesis. Its function is as follows. Catalyzes the N-acylation of UDP-3-O-acylglucosamine using 3-hydroxyacyl-ACP as the acyl donor. Is involved in the biosynthesis of lipid A, a phosphorylated glycolipid that anchors the lipopolysaccharide to the outer membrane of the cell. This Rickettsia conorii (strain ATCC VR-613 / Malish 7) protein is UDP-3-O-acylglucosamine N-acyltransferase.